The primary structure comprises 217 residues: tRNA (guanine-N(7)-)-methyltransferase (217 aa).

Glu-43, Asp-68, Asn-101, and Asn-123 together coordinate S-adenosyl-L-methionine. Lys-127 serves as a coordination point for substrate. The interval 129 to 134 is interaction with RNA; it reads RHNKRR. Substrate-binding positions include Asp-159 and 196–199; that span reads TEYE.

Belongs to the class I-like SAM-binding methyltransferase superfamily. TrmB family.

It catalyses the reaction guanosine(46) in tRNA + S-adenosyl-L-methionine = N(7)-methylguanosine(46) in tRNA + S-adenosyl-L-homocysteine. It functions in the pathway tRNA modification; N(7)-methylguanine-tRNA biosynthesis. Functionally, catalyzes the formation of N(7)-methylguanine at position 46 (m7G46) in tRNA. The protein is tRNA (guanine-N(7)-)-methyltransferase of Clostridium botulinum (strain Loch Maree / Type A3).